The chain runs to 207 residues: Small ribosomal subunit protein uS4 (207 aa).

A disordered region spans residues 26–47 (AINNKNYKPGQQGNSSSISKPS). Residues 28-39 (NNKNYKPGQQGN) show a composition bias toward polar residues. The S4 RNA-binding domain occupies 95 to 158 (RRLDAVVYRL…KQIPIVIGAI (64 aa)).

It belongs to the universal ribosomal protein uS4 family. Part of the 30S ribosomal subunit. Contacts protein S5. The interaction surface between S4 and S5 is involved in control of translational fidelity.

In terms of biological role, one of the primary rRNA binding proteins, it binds directly to 16S rRNA where it nucleates assembly of the body of the 30S subunit. Functionally, with S5 and S12 plays an important role in translational accuracy. This chain is Small ribosomal subunit protein uS4, found in Orientia tsutsugamushi (strain Boryong) (Rickettsia tsutsugamushi).